The sequence spans 387 residues: EARP and GARP complex-interacting protein 1 (387 aa).

Methionine 1 is subject to N-acetylmethionine. WD repeat units follow at residues 132–172 (TAHS…SQAV), 180–222 (GGKG…QIYC), 226–266 (AHGQ…EPVK), and 270–310 (EHSH…SEPF). The interval 310–334 (FGHLVDDDDISDQEDHRSEEKSKEP) is disordered. Serine 320 is modified (phosphoserine). Positions 322-334 (QEDHRSEEKSKEP) are enriched in basic and acidic residues. The stretch at 345–385 (EHEDSVYAVDWSSADPWLFASLSYDGRLVINRVPRALKYHI) is one WD 5 repeat.

This sequence belongs to the WD repeat EIPR1 family. Interacts with two multisubunit tethering complexes: EARP composed of VPS50, VPS51, VPS52 and VPS53 subunits and GARP complex composed of VPS51, VPS52, VPS53 and VPS54 subunits. Interacts with SNAP29.

Its subcellular location is the golgi apparatus. The protein localises to the trans-Golgi network. In terms of biological role, acts as a component of endosomal retrieval machinery that is involved in protein transport from early endosomes to either recycling endosomes or the trans-Golgi network. Mediates the recruitment of Golgi-associated retrograde protein (GARP) complex to the trans-Golgi network and controls early endosome-to-Golgi transport of internalized protein. Promotes the recycling of internalized transferrin receptor (TFRC) to the plasma membrane through interaction with endosome-associated recycling protein (EARP) complex. Controls proper insulin distribution and secretion, and retention of cargo in mature dense core vesicles. Required for the stability of the endosome-associated retrograde protein (EARP) complex subunits and for proper localization and association of EARP with membranes. The protein is EARP and GARP complex-interacting protein 1 of Macaca fascicularis (Crab-eating macaque).